Reading from the N-terminus, the 286-residue chain is Polyamine aminopropyltransferase (286 aa).

In terms of domain architecture, PABS spans 5 to 238; that stretch reads TMWHETLHDQ…GIMTFAWATN (234 aa). Gln-33 is a binding site for S-methyl-5'-thioadenosine. The spermidine site is built by His-64 and Asp-88. S-methyl-5'-thioadenosine is bound by residues Glu-108 and 140–141; that span reads DG. Catalysis depends on Asp-158, which acts as the Proton acceptor. Position 158 to 161 (158 to 161) interacts with spermidine; that stretch reads DCTD. S-methyl-5'-thioadenosine is bound at residue Pro-165.

The protein belongs to the spermidine/spermine synthase family. Homodimer or homotetramer.

It localises to the cytoplasm. The catalysed reaction is S-adenosyl 3-(methylsulfanyl)propylamine + putrescine = S-methyl-5'-thioadenosine + spermidine + H(+). It functions in the pathway amine and polyamine biosynthesis; spermidine biosynthesis; spermidine from putrescine: step 1/1. In terms of biological role, catalyzes the irreversible transfer of a propylamine group from the amino donor S-adenosylmethioninamine (decarboxy-AdoMet) to putrescine (1,4-diaminobutane) to yield spermidine. In Salmonella paratyphi B (strain ATCC BAA-1250 / SPB7), this protein is Polyamine aminopropyltransferase.